Consider the following 679-residue polypeptide: UvrABC system protein B (679 aa).

Positions 25–176 constitute a Helicase ATP-binding domain; sequence YGVNQGKQYQ…NVRESLRELV (152 aa). 38-45 provides a ligand contact to ATP; the sequence is GATGTGKT. The Beta-hairpin motif lies at 91–114; that stretch reads YYDYYQPEAYVPVSDTYIAKTSSV. A Helicase C-terminal domain is found at 429-591; it reads QIDDLLDEIR…IIPKPAGKKP (163 aa). One can recognise a UVR domain in the interval 639 to 674; the sequence is PEIIDKLEGKMNLAAEELDFEQAAKLRDRIRQLRKK.

Belongs to the UvrB family. Forms a heterotetramer with UvrA during the search for lesions. Interacts with UvrC in an incision complex.

It is found in the cytoplasm. Functionally, the UvrABC repair system catalyzes the recognition and processing of DNA lesions. A damage recognition complex composed of 2 UvrA and 2 UvrB subunits scans DNA for abnormalities. Upon binding of the UvrA(2)B(2) complex to a putative damaged site, the DNA wraps around one UvrB monomer. DNA wrap is dependent on ATP binding by UvrB and probably causes local melting of the DNA helix, facilitating insertion of UvrB beta-hairpin between the DNA strands. Then UvrB probes one DNA strand for the presence of a lesion. If a lesion is found the UvrA subunits dissociate and the UvrB-DNA preincision complex is formed. This complex is subsequently bound by UvrC and the second UvrB is released. If no lesion is found, the DNA wraps around the other UvrB subunit that will check the other stand for damage. This is UvrABC system protein B from Prochlorococcus marinus (strain MIT 9211).